Consider the following 208-residue polypeptide: MDPFLVLLHSVSSSLSSSELTELKFLCLGRVGKRKLERVQSGLDLFSMLLEQNDLEPGHTELLRELLASLRRHDLLRRVDDFEAGAAAGAAPGEEDLCAAFNVICDNVGKDWRRLARQLKVSDTKIDSIEDRYPRNLTERVRESLRIWKNTEKENATVAHLVGALRSCQMNLVADLVQEVQQARDLQNRSGAMSPMSWNSDASTSEAS.

Positions 3–81 (PFLVLLHSVS…RHDLLRRVDD (79 aa)) constitute a DED domain. Residues 97–181 (LCAAFNVICD…LVADLVQEVQ (85 aa)) enclose the Death domain. R117 carries a (Microbial infection) N-beta-linked (GlcNAc) arginine glycan. A disordered region spans residues 187-208 (QNRSGAMSPMSWNSDASTSEAS). A Phosphoserine modification is found at S194.

Can self-associate. Component of the AIM2 PANoptosome complex, a multiprotein complex that drives inflammatory cell death (PANoptosis). Component of the death-induced signaling complex (DISC) composed of cell surface receptor FAS/CD95 or TNFRSF1A, adapter protein FADD and the CASP8 protease; recruitment of CASP8 to the complex is required for processing of CASP8 into the p18 and p10 subunits. Interacts (via death domain) with FAS (via death domain). Interacts directly (via DED domain) with NOL3 (via CARD domain); inhibits death-inducing signaling complex (DISC) assembly by inhibiting the increase in FAS-FADD binding induced by FAS activation. Interacts with CFLAR, PEA15 and MBD4. When phosphorylated, part of a complex containing HIPK3 and FAS. May interact with MAVS/IPS1. Interacts with MOCV v-CFLAR protein and PIDD1. Interacts with RIPK1 and TRADD. Interacts with stimulated TNFRSF10B. Interacts with DDX24. In terms of assembly, (Microbial infection) Interacts with human papillomavirus 16/HPV16 protein E6. As to quaternary structure, (Microbial infection) Interacts with molluscum contagiosum virus proteins MC159L/v-CFLAR and MC160L. (Microbial infection) Glycosylated at Arg-117 by enteropathogenic E.coli protein NleB1, C.rodentium protein NleB and S.typhimurium protein Ssek1: arginine GlcNAcylation prevents recruitment of caspase-8 or caspase-10 to the activated Fas (CD95) or TNFR-1 receptors. Expressed in a wide variety of tissues, except for peripheral blood mononuclear leukocytes.

It localises to the cytoplasm. In terms of biological role, apoptotic adapter molecule that recruits caspases CASP8 or CASP10 to the activated FAS/CD95 or TNFRSF1A/TNFR-1 receptors. The resulting aggregate called the death-inducing signaling complex (DISC) performs CASP8 proteolytic activation. Active CASP8 initiates the subsequent cascade of caspases mediating apoptosis. Involved in interferon-mediated antiviral immune response, playing a role in the positive regulation of interferon signaling. This chain is FAS-associated death domain protein, found in Homo sapiens (Human).